The chain runs to 374 residues: PqqA peptide cyclase (374 aa).

One can recognise a Radical SAM core domain in the interval 4–224 (IEPPMGLLAE…ERLKGVMVID (221 aa)). 3 residues coordinate [4Fe-4S] cluster: Cys18, Cys22, and Cys25.

It belongs to the radical SAM superfamily. PqqE family. Interacts with PqqD. The interaction is necessary for activity of PqqE. [4Fe-4S] cluster is required as a cofactor.

The enzyme catalyses [PQQ precursor protein] + S-adenosyl-L-methionine = E-Y cross-linked-[PQQ precursor protein] + 5'-deoxyadenosine + L-methionine + H(+). It participates in cofactor biosynthesis; pyrroloquinoline quinone biosynthesis. Its function is as follows. Catalyzes the cross-linking of a glutamate residue and a tyrosine residue in the PqqA protein as part of the biosynthesis of pyrroloquinoline quinone (PQQ). The chain is PqqA peptide cyclase from Granulibacter bethesdensis (strain ATCC BAA-1260 / CGDNIH1).